A 147-amino-acid polypeptide reads, in one-letter code: UPF0208 membrane protein CGSHiEE_06015 (147 aa).

The next 2 membrane-spanning stretches (helical) occupy residues 38-58 (FAQK…QIYA) and 67-87 (IAIL…YWLG).

It belongs to the UPF0208 family.

Its subcellular location is the cell inner membrane. This Haemophilus influenzae (strain PittEE) protein is UPF0208 membrane protein CGSHiEE_06015.